We begin with the raw amino-acid sequence, 180 residues long: Ribosome maturation factor RimM (180 aa).

Positions 108-180 (PDEYYWVDLE…LIVVDWDPDF (73 aa)) constitute a PRC barrel domain.

This sequence belongs to the RimM family. In terms of assembly, binds ribosomal protein uS19.

Its subcellular location is the cytoplasm. An accessory protein needed during the final step in the assembly of 30S ribosomal subunit, possibly for assembly of the head region. Essential for efficient processing of 16S rRNA. May be needed both before and after RbfA during the maturation of 16S rRNA. It has affinity for free ribosomal 30S subunits but not for 70S ribosomes. The sequence is that of Ribosome maturation factor RimM from Xanthomonas euvesicatoria pv. vesicatoria (strain 85-10) (Xanthomonas campestris pv. vesicatoria).